The primary structure comprises 382 residues: Pyrimidine monooxygenase RutA (382 aa).

FMN contacts are provided by residues 68–69, Asn134, Glu143, 159–160, and Ser209; these read IK and RY.

This sequence belongs to the NtaA/SnaA/DszA monooxygenase family. RutA subfamily.

The catalysed reaction is uracil + FMNH2 + NADH + O2 = (Z)-3-ureidoacrylate + FMN + NAD(+) + H2O + H(+). The enzyme catalyses thymine + FMNH2 + NADH + O2 = (Z)-2-methylureidoacrylate + FMN + NAD(+) + H2O + H(+). Catalyzes the pyrimidine ring opening between N-3 and C-4 by an unusual flavin hydroperoxide-catalyzed mechanism, adding oxygen atoms in the process to yield ureidoacrylate peracid, that immediately reacts with FMN forming ureidoacrylate and FMN-N(5)-oxide. The FMN-N(5)-oxide reacts spontaneously with NADH to produce FMN. Requires the flavin reductase RutF to regenerate FMN in vivo. In Escherichia coli (strain 55989 / EAEC), this protein is Pyrimidine monooxygenase RutA.